Reading from the N-terminus, the 290-residue chain is 33 kDa chaperonin (290 aa).

Cystine bridges form between Cys235–Cys237 and Cys268–Cys271.

The protein belongs to the HSP33 family. Post-translationally, under oxidizing conditions two disulfide bonds are formed involving the reactive cysteines. Under reducing conditions zinc is bound to the reactive cysteines and the protein is inactive.

The protein resides in the cytoplasm. In terms of biological role, redox regulated molecular chaperone. Protects both thermally unfolding and oxidatively damaged proteins from irreversible aggregation. Plays an important role in the bacterial defense system toward oxidative stress. The chain is 33 kDa chaperonin from Streptococcus sanguinis (strain SK36).